A 97-amino-acid chain; its full sequence is UPF0416 protein RC0826 (97 aa).

Positions 1 to 33 (MRIFVKAAISTAAWRFYAHPTVAMGICVGTALA) are cleaved as a signal peptide.

Belongs to the UPF0416 family.

The chain is UPF0416 protein RC0826 from Rickettsia conorii (strain ATCC VR-613 / Malish 7).